Here is a 1088-residue protein sequence, read N- to C-terminus: Serine/threonine-protein kinase LATS2 (1088 aa).

Residues 24–49 (EGLKQPSKSSVQGLPAGPNSDTSLDA) are disordered. Ser-83 is modified (phosphoserine; by AURKA). Residues 98–139 (EVNRQMLQELVNAGCDQEMAGRALKQTGSRSIEAALEYISKM) form the UBA domain. The interaction with ubiquitinated AMOTL2 stretch occupies residues 101–141 (RQMLQELVNAGCDQEMAGRALKQTGSRSIEAALEYISKMGY). The span at 271-280 (RSPSFQSKTP) shows a compositional bias: polar residues. The tract at residues 271-323 (RSPSFQSKTPPETGGYASLPTKGQGGPPGAGLAFPPPAAGLYVPHPHHKQAGP) is disordered. At Thr-279 the chain carries Phosphothreonine. Residue Ser-380 is modified to Phosphoserine. 2 disordered regions span residues 383-428 (KPGL…SLPA) and 454-483 (PQTA…AAEG). Positions 404–413 (SRTNSFNSHQ) are enriched in polar residues. Residues 466-478 (VPAPAPAPAPAPA) are compositionally biased toward pro residues. The PPxY motif signature appears at 515–518 (PPPY). The disordered stretch occupies residues 543–592 (SLRAGPNEPEGGDKSRKSAKGDKGGKDKKQIQTSPVPVRKNSRDEEKRES). Basic and acidic residues predominate over residues 553–572 (GGDKSRKSAKGDKGGKDKKQ). Ser-576 carries the post-translational modification Phosphoserine. Over residues 583 to 592 (NSRDEEKRES) the composition is skewed to basic and acidic residues. Residues 668 to 973 (FVKIKTLGIG…ADDLKAHPFF (306 aa)) enclose the Protein kinase domain. Residues 674 to 682 (LGIGAFGEV) and Lys-697 each bind ATP. Residue Asp-791 is the Proton acceptor of the active site. In terms of domain architecture, AGC-kinase C-terminal spans 974–1052 (SAIDFSSDIR…RRFFDDNGYP (79 aa)). Residues 994–1022 (SHPMDTSNFDPVDEESPWNDASEGSTKAW) are disordered. At Thr-1041 the chain carries Phosphothreonine. The tract at residues 1056–1088 (PKPSGAEASQAESSDLESSDLVDQTEGCQPVYV) is disordered.

This sequence belongs to the protein kinase superfamily. AGC Ser/Thr protein kinase family. In terms of assembly, interacts with and is phosphorylated by AURKA. Binds to AR. Interacts with AJUBA during mitosis and this complex regulates organization of the spindle apparatus through recruitment of gamma-tubulin to the centrosome. Interacts (via PPxY motif) with YAP1 (via WW domains). Interacts with MOB1A and MOB1B. Interacts with LIMD1, WTIP and AJUBA. Interacts with SNAI1. Interacts with WWC1, WWC2 and WWC3 (via their WW domains). Interacts (via UBA domain) with ubiquitinated AMOTL2; the interaction promotes LATS2 phosphorylation of YAP1. Requires Mg(2+) as cofactor. In terms of processing, autophosphorylated and phosphorylated during M-phase and the G1/S-phase of the cell cycle. Phosphorylated and activated by STK3/MST2. Phosphorylated by MAP4Ks; in parallel to STK3/MST2 and resulting to its activation. Phosphorylation by NUAK2 may regulate its activity in phosphorylation and inactivation YAP1. Expressed at high levels in heart and skeletal muscle and at lower levels in all other tissues examined.

It is found in the cytoplasm. The protein localises to the cytoskeleton. Its subcellular location is the microtubule organizing center. It localises to the centrosome. The protein resides in the spindle pole. It is found in the nucleus. The enzyme catalyses L-seryl-[protein] + ATP = O-phospho-L-seryl-[protein] + ADP + H(+). The catalysed reaction is L-threonyl-[protein] + ATP = O-phospho-L-threonyl-[protein] + ADP + H(+). Negative regulator of YAP1 in the Hippo signaling pathway that plays a pivotal role in organ size control and tumor suppression by restricting proliferation and promoting apoptosis. The core of this pathway is composed of a kinase cascade wherein STK3/MST2 and STK4/MST1, in complex with its regulatory protein SAV1, phosphorylates and activates LATS1/2 in complex with its regulatory protein MOB1, which in turn phosphorylates and inactivates YAP1 oncoprotein and WWTR1/TAZ. Phosphorylation of YAP1 by LATS2 inhibits its translocation into the nucleus to regulate cellular genes important for cell proliferation, cell death, and cell migration. Also phosphorylates YAP1 in response to cell contact inhibition-driven WWP1 ubiquitination of AMOTL2, which results in LATS2 activation. Acts as a tumor suppressor which plays a critical role in centrosome duplication, maintenance of mitotic fidelity and genomic stability. Negatively regulates G1/S transition by down-regulating cyclin E/CDK2 kinase activity. Negative regulator of the androgen receptor. Phosphorylates SNAI1 in the nucleus leading to its nuclear retention and stabilization, which enhances its epithelial-mesenchymal transition and tumor cell invasion/migration activities. This tumor-promoting activity is independent of its effects upon YAP1 or WWTR1/TAZ. Acts as an activator of the NLRP3 inflammasome by mediating phosphorylation of 'Ser-265' of NLRP3 following NLRP3 palmitoylation, promoting NLRP3 activation by NEK7. The sequence is that of Serine/threonine-protein kinase LATS2 from Homo sapiens (Human).